The following is a 30-amino-acid chain: Ranatuerin-2OK (30 aa).

Cysteine 23 and cysteine 30 are joined by a disulfide.

Expressed by the skin glands.

Its subcellular location is the secreted. Functionally, antimicrobial peptide. Active against Gram-negative bacterium E.coli (MIC=12.5 uM) and against Gram-positive bacterium S.aureus (MIC=50 uM). This Nidirana okinavana (Kampira Falls frog) protein is Ranatuerin-2OK.